The following is a 480-amino-acid chain: NADH-quinone oxidoreductase subunit N (480 aa).

13 helical membrane passes run 13-33 (ISPMLILCGVALLSLVVQFLI), 41-61 (PLWVLSILGILVAMYALYHTT), 81-101 (VWLSAIYLIAGLITLLVAPPF), 107-127 (TLFPEFFPLMLFCLSGMMFLT), 132-152 (LIVIFVGLEILSLSLYVMIGM), 167-187 (FLLGTFSSGFMLLGIAFLYGG), 212-232 (LGLGLFFVGVSFKAALVPFHS), 245-265 (ITGFMASAGKASALGLVIILF), 276-296 (VWKYLMGTIALISMTWGNIVA), 314-334 (AGYIVAGIACGAGLEALYYLF), 373-393 (ALALSLVFLSFAGFPPLIGFW), 413-433 (LLFGAVANSCIAFYYYMKITI), and 454-474 (PTLGFLIFLLCVFFTAGWIFF).

It belongs to the complex I subunit 2 family. NDH-1 is composed of 14 different subunits. Subunits NuoA, H, J, K, L, M, N constitute the membrane sector of the complex.

It is found in the cell inner membrane. It carries out the reaction a quinone + NADH + 5 H(+)(in) = a quinol + NAD(+) + 4 H(+)(out). NDH-1 shuttles electrons from NADH, via FMN and iron-sulfur (Fe-S) centers, to quinones in the respiratory chain. The immediate electron acceptor for the enzyme in this species is believed to be ubiquinone. Couples the redox reaction to proton translocation (for every two electrons transferred, four hydrogen ions are translocated across the cytoplasmic membrane), and thus conserves the redox energy in a proton gradient. This chain is NADH-quinone oxidoreductase subunit N, found in Leptospira biflexa serovar Patoc (strain Patoc 1 / Ames).